The chain runs to 282 residues: MSSYENHQALDGLTLGKSTDYRDNYDASLLQGVPRSLNRDPLGLTADNLPFHGADIWTLYELSWLNSQGLPQVAVGHVELDYTSVNLIESKSFKLYLNSFNQTRFDTWETVRQTLERDLRACAQGNVSVRLHRLDELEGQPVAHFHGTCIDDQDISIDNYQFTTDYLQHAVSGEKQVEETLVSHLLKSNCLITHQPDWGSIQIQYRGRKIDREKLLRYLVSFRHHNEFHEQCVERIFNDILRFCQPETLSVYARYTRRGGLDINPWRSNTDFVPATGRLARQ.

Residue 88–90 (IES) participates in substrate binding. 90 to 91 (SK) contacts NADPH. The active-site Thioimide intermediate is the Cys190. The Proton donor role is filled by Asp197. Substrate is bound at residue 229–230 (HE). 258–259 (RG) contacts NADPH.

Belongs to the GTP cyclohydrolase I family. QueF type 2 subfamily. As to quaternary structure, homodimer.

Its subcellular location is the cytoplasm. The catalysed reaction is 7-aminomethyl-7-carbaguanine + 2 NADP(+) = 7-cyano-7-deazaguanine + 2 NADPH + 3 H(+). The protein operates within tRNA modification; tRNA-queuosine biosynthesis. Its function is as follows. Catalyzes the NADPH-dependent reduction of 7-cyano-7-deazaguanine (preQ0) to 7-aminomethyl-7-deazaguanine (preQ1). In Salmonella paratyphi C (strain RKS4594), this protein is NADPH-dependent 7-cyano-7-deazaguanine reductase.